A 185-amino-acid polypeptide reads, in one-letter code: NADH-quinone oxidoreductase subunit B (185 aa).

Residues Cys37, Cys38, Cys103, and Cys132 each coordinate [4Fe-4S] cluster.

It belongs to the complex I 20 kDa subunit family. In terms of assembly, NDH-1 is composed of 14 different subunits. Subunits NuoB, C, D, E, F, and G constitute the peripheral sector of the complex. Requires [4Fe-4S] cluster as cofactor.

It localises to the cell membrane. The catalysed reaction is a quinone + NADH + 5 H(+)(in) = a quinol + NAD(+) + 4 H(+)(out). Its function is as follows. NDH-1 shuttles electrons from NADH, via FMN and iron-sulfur (Fe-S) centers, to quinones in the respiratory chain. The immediate electron acceptor for the enzyme in this species is believed to be a menaquinone. Couples the redox reaction to proton translocation (for every two electrons transferred, four hydrogen ions are translocated across the cytoplasmic membrane), and thus conserves the redox energy in a proton gradient. The polypeptide is NADH-quinone oxidoreductase subunit B (Thermobifida fusca (strain YX)).